The primary structure comprises 342 residues: Photosystem II D2 protein (342 aa).

The Cytoplasmic segment spans residues 1–29 (ERGWFDILDDWLKRDRFVFVGWSGILLFP). The chain crosses the membrane as a helical span at residues 30 to 50 (CAYLALGGWLTGTTFVTSWYT). Residues 51–113 (HGLASSYLEG…IALHGAFGLI (63 aa)) are Lumenal-facing. A chlorophyll a-binding site is contributed by histidine 107. A helical membrane pass occupies residues 114–130 (GFMLRQFEIARLVGVRP). Pheophytin a contacts are provided by glutamine 119 and asparagine 132. Topologically, residues 131-141 (YNAIAFSAPIA) are cytoplasmic. The helical transmembrane segment at 142 to 155 (VFVSVFLIYPLGQS) threads the bilayer. Topologically, residues 156–196 (SWFFAPSFGVAAIFRFLLFFQGFHNWTLNPFHMMGVAGVLG) are lumenal. Histidine 187 provides a ligand contact to chlorophyll a. The helical transmembrane segment at 197–217 (GALLCAIHGATVENTLFQDGE) threads the bilayer. The a plastoquinone site is built by histidine 204 and phenylalanine 251. Residue histidine 204 coordinates Fe cation. Residues 218–267 (GASTFRAFNPTQAEETYSMVTANRFWSQIFGIAFSNKRWLHFFMLFVPVT) are Cytoplasmic-facing. Histidine 258 contributes to the Fe cation binding site. A helical membrane pass occupies residues 268–284 (GLWMSAIGVVGLALNLR). Residues 285 to 342 (SYDFISQEIRAAEDPEFETFYTKNLLLNEGIRAWMAPQDQPHENFVFPEEVLPRGNAL) lie on the Lumenal side of the membrane.

It belongs to the reaction center PufL/M/PsbA/D family. PSII is composed of 1 copy each of membrane proteins PsbA, PsbB, PsbC, PsbD, PsbE, PsbF, PsbH, PsbI, PsbJ, PsbK, PsbL, PsbM, PsbT, PsbX, PsbY, PsbZ, Psb30/Ycf12, peripheral proteins PsbO, CyanoQ (PsbQ), PsbU, PsbV and a large number of cofactors. It forms dimeric complexes. It depends on The D1/D2 heterodimer binds P680, chlorophylls that are the primary electron donor of PSII, and subsequent electron acceptors. It shares a non-heme iron and each subunit binds pheophytin, quinone, additional chlorophylls, carotenoids and lipids. There is also a Cl(-1) ion associated with D1 and D2, which is required for oxygen evolution. The PSII complex binds additional chlorophylls, carotenoids and specific lipids. as a cofactor.

It localises to the cellular thylakoid membrane. The catalysed reaction is 2 a plastoquinone + 4 hnu + 2 H2O = 2 a plastoquinol + O2. In terms of biological role, photosystem II (PSII) is a light-driven water:plastoquinone oxidoreductase that uses light energy to abstract electrons from H(2)O, generating O(2) and a proton gradient subsequently used for ATP formation. It consists of a core antenna complex that captures photons, and an electron transfer chain that converts photonic excitation into a charge separation. The D1/D2 (PsbA/PsbD) reaction center heterodimer binds P680, the primary electron donor of PSII as well as several subsequent electron acceptors. D2 is needed for assembly of a stable PSII complex. In Thermostichus vulcanus (Synechococcus vulcanus), this protein is Photosystem II D2 protein.